The primary structure comprises 149 residues: Large ribosomal subunit protein eL19 (149 aa).

The span at K55–K69 shows a compositional bias: basic and acidic residues. Positions K55–K93 are disordered. The span at R70 to T88 shows a compositional bias: basic residues.

This sequence belongs to the eukaryotic ribosomal protein eL19 family. Part of the 50S ribosomal subunit.

Its function is as follows. Binds to the 23S rRNA. The chain is Large ribosomal subunit protein eL19 from Methanococcus vannielii.